The following is a 342-amino-acid chain: Cyclin-dependent kinase-like 4 (342 aa).

Residues 4–286 (YEKLAKIGEG…CAQLLDSAYF (283 aa)) form the Protein kinase domain. ATP is bound by residues 10–18 (IGEGSYGVV) and Lys33. The short motif at 45-51 (RKIALRE) is the [NKR]KIAxRE element. Asp126 (proton acceptor) is an active-site residue. Residues 295–328 (KRKARSEGRSRRRQQNQLLPLIPGSHISPTPDGR) are disordered.

This sequence belongs to the protein kinase superfamily. CMGC Ser/Thr protein kinase family. CDC2/CDKX subfamily.

The protein localises to the cytoplasm. The enzyme catalyses L-seryl-[protein] + ATP = O-phospho-L-seryl-[protein] + ADP + H(+). It carries out the reaction L-threonyl-[protein] + ATP = O-phospho-L-threonyl-[protein] + ADP + H(+). This Mus musculus (Mouse) protein is Cyclin-dependent kinase-like 4 (Cdkl4).